We begin with the raw amino-acid sequence, 141 residues long: Vasotocin-neurophysin VT (141 aa).

Cys-1 and Cys-6 are disulfide-bonded. Gly-9 carries the glycine amide modification. 7 disulfide bridges follow: Cys-22–Cys-66, Cys-25–Cys-39, Cys-33–Cys-56, Cys-40–Cys-46, Cys-73–Cys-85, Cys-79–Cys-97, and Cys-86–Cys-91. A glycan (N-linked (GlcNAc...) asparagine) is linked at Asn-117.

Belongs to the vasopressin/oxytocin family. Seven disulfide bonds are present in neurophysin.

Its subcellular location is the secreted. In terms of biological role, vasotocin is an antidiuretic hormone. This Pelophylax lessonae (Pool frog) protein is Vasotocin-neurophysin VT.